Consider the following 685-residue polypeptide: Dammaradiene synthase (685 aa).

2 PFTB repeats span residues 82 to 123 (MDKM…RLLN) and 265 to 308 (IREA…DPVV). Asp400 (proton donor) is an active-site residue. 2 PFTB repeats span residues 424-465 (ITRC…KAMV) and 621-672 (IGHG…ARYR).

Belongs to the terpene cyclase/mutase family.

The catalysed reaction is squalene = dammara-20,24-diene. Squalene cyclase producing the tetracyclic triterpene dammaradiene. The polypeptide is Dammaradiene synthase (DCD) (Dryopteris crassirhizoma (Thick stemmed wood fern)).